Here is a 146-residue protein sequence, read N- to C-terminus: Hemoglobin subunit beta-2 (146 aa).

Positions 2–146 (HWTAEEKQLV…VAHALAYHYH (145 aa)) constitute a Globin domain. Heme b is bound by residues H63 and H92.

The protein belongs to the globin family. In terms of assembly, there are three forms of hemoglobin in Sphenodon: A, A' and D. Hb A is a tetramer of two alpha-A and two beta-1, Hb A' is a tetramer of two alpha-a and two beta-2, Hb D is a tetramer of two alpha-D and two beta-2.

Involved in oxygen transport from the lung to the various peripheral tissues. This is Hemoglobin subunit beta-2 (HBB2) from Sphenodon punctatus (Tuatara).